Here is a 587-residue protein sequence, read N- to C-terminus: Adenine deaminase (587 aa).

Belongs to the metallo-dependent hydrolases superfamily. Adenine deaminase family. Mn(2+) serves as cofactor.

The enzyme catalyses adenine + H2O + H(+) = hypoxanthine + NH4(+). This is Adenine deaminase from Shewanella halifaxensis (strain HAW-EB4).